Reading from the N-terminus, the 406-residue chain is Outer membrane protein assembly factor BamB (406 aa).

Positions 1-23 are cleaved as a signal peptide; the sequence is MMKQVDMYKRVALIALMGMSLAG. A lipid anchor (N-palmitoyl cysteine) is attached at cysteine 24. Cysteine 24 carries S-diacylglycerol cysteine lipidation.

The protein belongs to the BamB family. Part of the Bam complex.

The protein localises to the cell outer membrane. In terms of biological role, part of the outer membrane protein assembly complex, which is involved in assembly and insertion of beta-barrel proteins into the outer membrane. This chain is Outer membrane protein assembly factor BamB, found in Xanthomonas campestris pv. campestris (strain ATCC 33913 / DSM 3586 / NCPPB 528 / LMG 568 / P 25).